A 193-amino-acid chain; its full sequence is Transmembrane protein 276 (193 aa).

An N-terminal signal peptide occupies residues 1–32 (MTPRPGGEWSSALSHLALGAVSLHAALSTAQA). The next 4 membrane-spanning stretches (helical) occupy residues 35 to 55 (GAAA…ASGL), 63 to 83 (AGAW…FHWV), 89 to 109 (SANL…HLGA), and 114 to 134 (VAGQ…AVFT).

It is found in the membrane. This is Transmembrane protein 276 from Bos taurus (Bovine).